The following is a 129-amino-acid chain: MKEVIDTVGRRKTSVARAFMIPGKGRVIVNKLPIEEYFKDEFKRQQALRPLVITERAEEFDIKINVQGGGVSGQSGAVSLAIARALTEFDETARVILKTEKLLTRDPRMVERKKFGRKKARKRFQFSKR.

The protein belongs to the universal ribosomal protein uS9 family.

This Pelodictyon phaeoclathratiforme (strain DSM 5477 / BU-1) protein is Small ribosomal subunit protein uS9.